We begin with the raw amino-acid sequence, 265 residues long: Thiazole synthase (265 aa).

K106 serves as the catalytic Schiff-base intermediate with DXP. Residues G167, 193–194, and 215–216 contribute to the 1-deoxy-D-xylulose 5-phosphate site; these read AG and NS.

The protein belongs to the ThiG family. In terms of assembly, homotetramer. Forms heterodimers with either ThiH or ThiS.

The protein localises to the cytoplasm. The catalysed reaction is [ThiS sulfur-carrier protein]-C-terminal-Gly-aminoethanethioate + 2-iminoacetate + 1-deoxy-D-xylulose 5-phosphate = [ThiS sulfur-carrier protein]-C-terminal Gly-Gly + 2-[(2R,5Z)-2-carboxy-4-methylthiazol-5(2H)-ylidene]ethyl phosphate + 2 H2O + H(+). The protein operates within cofactor biosynthesis; thiamine diphosphate biosynthesis. Catalyzes the rearrangement of 1-deoxy-D-xylulose 5-phosphate (DXP) to produce the thiazole phosphate moiety of thiamine. Sulfur is provided by the thiocarboxylate moiety of the carrier protein ThiS. In vitro, sulfur can be provided by H(2)S. The polypeptide is Thiazole synthase (Prochlorococcus marinus subsp. pastoris (strain CCMP1986 / NIES-2087 / MED4)).